Here is a 363-residue protein sequence, read N- to C-terminus: Phospho-N-acetylmuramoyl-pentapeptide-transferase (363 aa).

The next 11 helical transmembrane spans lie at 4 to 24 (NLLV…NVIV), 28 to 48 (IAIL…IKYF), 72 to 92 (TPTM…LMLA), 96 to 116 (NIYV…GLID), 129 to 149 (INAT…CMIV), 169 to 189 (LTID…IGSS), 200 to 220 (GLVT…CYLA), 241 to 261 (ELTV…WYNI), 266 to 286 (IFMG…ISVI), 294 to 314 (GIIG…IYSI), and 342 to 362 (IVSR…SSLI).

The protein belongs to the glycosyltransferase 4 family. MraY subfamily. Mg(2+) serves as cofactor.

Its subcellular location is the cell inner membrane. It catalyses the reaction UDP-N-acetyl-alpha-D-muramoyl-L-alanyl-gamma-D-glutamyl-meso-2,6-diaminopimeloyl-D-alanyl-D-alanine + di-trans,octa-cis-undecaprenyl phosphate = di-trans,octa-cis-undecaprenyl diphospho-N-acetyl-alpha-D-muramoyl-L-alanyl-D-glutamyl-meso-2,6-diaminopimeloyl-D-alanyl-D-alanine + UMP. Its pathway is cell wall biogenesis; peptidoglycan biosynthesis. Functionally, catalyzes the initial step of the lipid cycle reactions in the biosynthesis of the cell wall peptidoglycan: transfers peptidoglycan precursor phospho-MurNAc-pentapeptide from UDP-MurNAc-pentapeptide onto the lipid carrier undecaprenyl phosphate, yielding undecaprenyl-pyrophosphoryl-MurNAc-pentapeptide, known as lipid I. The sequence is that of Phospho-N-acetylmuramoyl-pentapeptide-transferase from Orientia tsutsugamushi (strain Ikeda) (Rickettsia tsutsugamushi).